Reading from the N-terminus, the 795-residue chain is Delta-1-pyrroline-5-carboxylate synthase (795 aa).

The tract at residues 1–361 (MLRHMHRSGV…FFSEVKPAGP (361 aa)) is glutamate 5-kinase. The substrate site is built by Ser117, Asp223, and Asn246. Residues 266-267 (SD) and 305-311 (LGGMEAK) each bind ATP. N6-succinyllysine is present on residues Lys311, Lys347, and Lys550. Residues 362–795 (TVEQQGEMAR…NLPVPQRNFS (434 aa)) are gamma-glutamyl phosphate reductase.

This sequence in the N-terminal section; belongs to the glutamate 5-kinase family. It in the C-terminal section; belongs to the gamma-glutamyl phosphate reductase family. In terms of assembly, can form homodimers/multimers.

It is found in the mitochondrion matrix. The enzyme catalyses L-glutamate + ATP = L-glutamyl 5-phosphate + ADP. The catalysed reaction is L-glutamate 5-semialdehyde + phosphate + NADP(+) = L-glutamyl 5-phosphate + NADPH + H(+). It participates in amino-acid biosynthesis; L-proline biosynthesis; L-glutamate 5-semialdehyde from L-glutamate: step 1/2. It functions in the pathway amino-acid biosynthesis; L-proline biosynthesis; L-glutamate 5-semialdehyde from L-glutamate: step 2/2. Its activity is regulated as follows. Isoform Short: Inhibited by L-ornithine with a Ki of approximately 0.25 mm. Isoform Long: Insensitive to ornithine inhibition. Thus, the two amino acid insert in the long isoform abolishes feedback inhibition of P5CS activity by L-ornithine. Its function is as follows. Bifunctional enzyme that converts glutamate to glutamate 5-semialdehyde, an intermediate in the biosynthesis of proline, ornithine and arginine. The sequence is that of Delta-1-pyrroline-5-carboxylate synthase (Aldh18a1) from Mus musculus (Mouse).